Consider the following 86-residue polypeptide: Mu-theraphotoxin-Hhn1b 3 (86 aa).

Positions 1-21 are cleaved as a signal peptide; sequence MKASMFLALTGLALLFVVCYA. A propeptide spanning residues 22 to 49 is cleaved from the precursor; that stretch reads SESEEKEFSNELLSSVLAVDDNSKGEER. Cystine bridges form between Cys-51/Cys-66, Cys-58/Cys-73, and Cys-65/Cys-80. Position 84 is an isoleucine amide (Ile-84).

The protein belongs to the neurotoxin 10 (Hwtx-1) family. 22 (Htx-4) subfamily. Monomer. In terms of tissue distribution, expressed by the venom gland.

It is found in the secreted. In terms of biological role, neurotoxin. Selectively blocks neuronal tetrodotoxin-sensitive voltage-gated sodium channels (Nav) with an IC(50) of 44.6 nM. Does not affect tetrodotoxin-resistant voltage-gated sodium channels or calcium channels. This Cyriopagopus hainanus (Chinese bird spider) protein is Mu-theraphotoxin-Hhn1b 3.